The chain runs to 422 residues: Elongation factor 1-alpha (422 aa).

The tr-type G domain occupies 5 to 221 (KPHMNLAVIG…DELKEPEKPS (217 aa)). The G1 stretch occupies residues 14 to 21 (GHIDHGKS). 14–21 (GHIDHGKS) contacts GTP. Residue Ser-21 coordinates Mg(2+). The G2 stretch occupies residues 70–74 (GITID). Positions 91-94 (DCPG) are G3. Residues 91–95 (DCPGH) and 146–149 (NKMD) each bind GTP. The interval 146–149 (NKMD) is G4. Residues 185 to 187 (SAF) form a G5 region.

Belongs to the TRAFAC class translation factor GTPase superfamily. Classic translation factor GTPase family. EF-Tu/EF-1A subfamily.

The protein localises to the cytoplasm. The enzyme catalyses GTP + H2O = GDP + phosphate + H(+). Its function is as follows. GTP hydrolase that promotes the GTP-dependent binding of aminoacyl-tRNA to the A-site of ribosomes during protein biosynthesis. The protein is Elongation factor 1-alpha of Methanosarcina acetivorans (strain ATCC 35395 / DSM 2834 / JCM 12185 / C2A).